A 206-amino-acid chain; its full sequence is Probable N-acetyltransferase 14 (206 aa).

The 198-residue stretch at 9–206 (LSVREMREEE…TIVQEFRKDI (198 aa)) folds into the N-acetyltransferase domain. Transmembrane regions (helical) follow at residues 37–57 (LILY…ASSG) and 60–80 (FILN…IVGL).

It belongs to the camello family.

It is found in the membrane. In terms of biological role, probable acetyltransferase. The polypeptide is Probable N-acetyltransferase 14 (nat14) (Xenopus tropicalis (Western clawed frog)).